We begin with the raw amino-acid sequence, 92 residues long: CRISPR-associated endoribonuclease Cas2 1 (92 aa).

Residue Asp-10 participates in Mg(2+) binding.

It belongs to the CRISPR-associated endoribonuclease Cas2 protein family. As to quaternary structure, homodimer, forms a heterotetramer with a Cas1 homodimer. Requires Mg(2+) as cofactor.

In terms of biological role, CRISPR (clustered regularly interspaced short palindromic repeat), is an adaptive immune system that provides protection against mobile genetic elements (viruses, transposable elements and conjugative plasmids). CRISPR clusters contain sequences complementary to antecedent mobile elements and target invading nucleic acids. CRISPR clusters are transcribed and processed into CRISPR RNA (crRNA). Functions as a ssRNA-specific endoribonuclease. Involved in the integration of spacer DNA into the CRISPR cassette. This Thermodesulfovibrio yellowstonii (strain ATCC 51303 / DSM 11347 / YP87) protein is CRISPR-associated endoribonuclease Cas2 1.